The sequence spans 208 residues: CASP-like protein 3A1 (208 aa).

Composition is skewed to polar residues over residues 1 to 11 (MGSFANGQNGS) and 17 to 33 (TPAT…TTSA). The tract at residues 1–33 (MGSFANGQNGSELGIQTPATGSNAALEPPTTSA) is disordered. Over 1-43 (MGSFANGQNGSELGIQTPATGSNAALEPPTTSAAAPRCPRLGM) the chain is Cytoplasmic. The chain crosses the membrane as a helical span at residues 44-64 (AMVAARAAALVMALLSVSLMV). At 65-92 (SAKQRGTLAIFGIEIPLYAKWSLSDSLQ) the chain is on the extracellular side. The helical transmembrane segment at 93 to 113 (SLVGISAAAAAYSLAQLLSIA) threads the bilayer. At 114 to 128 (HTALKKAPVVPSRRY) the chain is on the cytoplasmic side. Residues 129–149 (AWMLLAGDQVFAYAMLSAGSA) form a helical membrane-spanning segment. Residues 150–183 (AAAVANLNRTGVRHTALPNFCKPLPRFCDLSAAS) are Extracellular-facing. Residue Asn-157 is glycosylated (N-linked (GlcNAc...) asparagine). The chain crosses the membrane as a helical span at residues 184-204 (IACAFLGCAFLAASAVIDVIW). Residues 205–208 (LSRL) are Cytoplasmic-facing.

It belongs to the Casparian strip membrane proteins (CASP) family. As to quaternary structure, homodimer and heterodimers.

The protein localises to the cell membrane. This chain is CASP-like protein 3A1, found in Hordeum vulgare subsp. vulgare (Domesticated barley).